The sequence spans 118 residues: Thioredoxin AMT13 (118 aa).

Residues 1 to 110 (MSDNKAIQTL…LEDAIRANLG (110 aa)) form the Thioredoxin domain. A disulfide bridge links Cys36 with Cys39.

The protein belongs to the thioredoxin family.

It participates in mycotoxin biosynthesis. Its function is as follows. Thioredoxin; part of the gene clusters that mediate the biosynthesis of AM-toxins, host-selective toxins (HSTs) causing Alternaria blotch on apple, a worldwide distributed disease. AM-toxins are cyclic depsipeptides containing the 3 residues 2-hydroxy-isovaleric acid (2-HIV), dehydroalanine, L-alanine which are common for all 3 AM-toxins I to III. The fourth precursor is L-alpha-amino-methoxyphenyl-valeric acid (L-Amv) for AM-toxin I, L-alpha-amino-phenyl-valeric acid (L-Apv) for AM-toxin II, and L-alpha-amino-hydroxyphenyl-valeric acid (L-Ahv) for AM-toxin III. AM-toxins have two target sites for affecting susceptible apple cells; they cause invagination of the plasma membrane and electrolyte loss and chloroplast disorganization. The non-ribosomal peptide synthetase AMT1 contains 4 catalytic modules and is responsible for activation of each residue in AM-toxin. The aldo-keto reductase AMT2 catalyzes the conversion of 2-keto-isovaleric acid (2-KIV) to 2-hydroxy-isovaleric acid (2-HIV), one of the precursor residues incorporated by AMT1 during AM-toxin biosynthesis, by reduction of its ketone to an alcohol. The cytochrome P450 monooxygenase AMT3 and the thioesterase AMT4 are also important for AM-toxin production, but their exact function within the AM-toxin biosynthesis are not known yet. Up to 21 proteins (including AMT1 to AMT4) are predicted to be involved in AM-toxin biosynthesis since their expression ishighly up-regulated in AM-toxin-producing cultures. This Alternaria alternata (Alternaria rot fungus) protein is Thioredoxin AMT13.